Consider the following 95-residue polypeptide: Co-chaperonin GroES (95 aa).

The protein belongs to the GroES chaperonin family. Heptamer of 7 subunits arranged in a ring. Interacts with the chaperonin GroEL.

It is found in the cytoplasm. Together with the chaperonin GroEL, plays an essential role in assisting protein folding. The GroEL-GroES system forms a nano-cage that allows encapsulation of the non-native substrate proteins and provides a physical environment optimized to promote and accelerate protein folding. GroES binds to the apical surface of the GroEL ring, thereby capping the opening of the GroEL channel. This Ruegeria sp. (strain TM1040) (Silicibacter sp.) protein is Co-chaperonin GroES.